A 364-amino-acid polypeptide reads, in one-letter code: Spermidine/putrescine import ATP-binding protein PotA (364 aa).

Residues 6–236 form the ABC transporter domain; it reads IEIRQIYKSY…PANLHVAMFI (231 aa). Position 38 to 45 (38 to 45) interacts with ATP; the sequence is GPSGCGKT.

Belongs to the ABC transporter superfamily. Spermidine/putrescine importer (TC 3.A.1.11.1) family. As to quaternary structure, the complex is composed of two ATP-binding proteins (PotA), two transmembrane proteins (PotB and PotC) and a solute-binding protein (PotD).

The protein resides in the cell inner membrane. The catalysed reaction is ATP + H2O + polyamine-[polyamine-binding protein]Side 1 = ADP + phosphate + polyamineSide 2 + [polyamine-binding protein]Side 1.. Functionally, part of the ABC transporter complex PotABCD involved in spermidine/putrescine import. Responsible for energy coupling to the transport system. The sequence is that of Spermidine/putrescine import ATP-binding protein PotA from Legionella pneumophila subsp. pneumophila (strain Philadelphia 1 / ATCC 33152 / DSM 7513).